Here is a 387-residue protein sequence, read N- to C-terminus: Alpha-sarcoglycan (387 aa).

Residues 1–23 (MAETLFWTPLLVVLLAGLGDTEA) form the signal peptide. Residues 24–290 (QQTTLHPLVG…APDRDFLVDA (267 aa)) are Extracellular-facing. 2 N-linked (GlcNAc...) asparagine glycosylation sites follow: asparagine 174 and asparagine 246. The helical transmembrane segment at 291-311 (LVTLLVPLLVALLLTLLLAYV) threads the bilayer. At 312–387 (MCCRREGRLK…AQVPLILDQH (76 aa)) the chain is on the cytoplasmic side. Phosphoserine is present on serine 377.

It belongs to the sarcoglycan alpha/epsilon family. As to quaternary structure, interacts with the syntrophin SNTA1. Cross-link to form 2 major subcomplexes: one consisting of SGCB, SGCD and SGCG and the other consisting of SGCB and SGCD. The association between SGCB and SGCG is particularly strong while SGCA is loosely associated with the other sarcoglycans. Most strongly expressed in skeletal muscle. Also expressed in cardiac muscle and, at much lower levels, in lung. In the fetus, most abundant in cardiac muscle and, at lower levels, in lung. Also detected in liver and kidney. Not expressed in brain.

The protein localises to the cell membrane. Its subcellular location is the sarcolemma. It localises to the cytoplasm. The protein resides in the cytoskeleton. Functionally, component of the sarcoglycan complex, a subcomplex of the dystrophin-glycoprotein complex which forms a link between the F-actin cytoskeleton and the extracellular matrix. The polypeptide is Alpha-sarcoglycan (SGCA) (Homo sapiens (Human)).